A 423-amino-acid chain; its full sequence is MKAQPPLRLTSQAMAFVLAGGRGSRLKELTDRRAKPAVYFGGKARIIDFALSNAMNSGIRKMAIATQYKAHSLIRHIQRGWNFFREERNEYLDILPASQRVDEHKWYLGTADAVTQNIDIVDSYDIKYVIILAGDHVYKMDYEIMLRQHCETGADVTIGCLTVPRMEATAFGVMHVDASLRITDFLEKPADPPGIPGDEGNALASMGIYVFDWAFLRDLLIRDAEDPNSSHDFGHDLIPAIVRNGKAMAHRFSDSCVMTGLETEPYWRDVGTIDAFWQANIDLTDFTPKLDLYDREWPIWTYSQIVPPAKFIHDSERRRGMAISSLVSGDCIVSGSEIRSSLLFTGCRTHSYSSLSHVVALPHVTVNRKADLTNCVLDRGVVIPEGLVIGQEPEEDARWFRRSEGGIVLVTQDMLDARARALG.

Residues Y107, G172, 187–188 (EK), and S205 contribute to the alpha-D-glucose 1-phosphate site.

This sequence belongs to the bacterial/plant glucose-1-phosphate adenylyltransferase family. As to quaternary structure, homotetramer.

The enzyme catalyses alpha-D-glucose 1-phosphate + ATP + H(+) = ADP-alpha-D-glucose + diphosphate. It participates in glycan biosynthesis; glycogen biosynthesis. Involved in the biosynthesis of ADP-glucose, a building block required for the elongation reactions to produce glycogen. Catalyzes the reaction between ATP and alpha-D-glucose 1-phosphate (G1P) to produce pyrophosphate and ADP-Glc. The chain is Glucose-1-phosphate adenylyltransferase from Cereibacter sphaeroides (strain ATCC 17025 / ATH 2.4.3) (Rhodobacter sphaeroides).